The following is a 440-amino-acid chain: Protein FPV117 (440 aa).

Belongs to the poxviruses G5 family.

The polypeptide is Protein FPV117 (Fowlpox virus (strain NVSL) (FPV)).